We begin with the raw amino-acid sequence, 1109 residues long: MAQTYYKIGVQSTEVNSESIFFNPEVDSSDTVAVVSAGIVVVGTILTAFASFVNPGVVLISFGTLAPVLWPDPEEDPKKIWSQFMKHGEDLLNQTISTAVKEIALAHLNGFKDVLTYYERAFNDWKRNPSANTARLVSQRFENAHFNFVSNMPQLQLPTYDTLLLSCYTEAANLHLNLLHQGVQFADQWNADQPHSPMLKSSGTYYDELLVYIEKYINYCTKTYHKGLNHLKESEKITWDAYNTYRREMTLIVLDLVATFPFYDIRRFPRGVELELTREVYTSLDHLTRPPGLFTWLSDIELYTESVAEGDYLSGIRESKYYTGNQFFTMKNIYGNTNRLSKQLITLLPGEFMTHLSINRPFQTIAGINKLYSLIQKIVFTTFKNDNEYQKNFNVNNQNEPQETTNYPNDYGGSNSQKFKHNLSHFPLIIHKLEFAEYFHSIFALGWTHNSVNSQNLISESVSTQIPLVKAYEVTNNSVIRGPGFTGGDLIELRDKCSIKCKASSLKKYAISLFYAANNAIAVSIDVGDSGAGVLLQPTFSRKGNNNFTIQDLNYKDFQYHTLLVDIELPESEEIHIHLKREDDYEEGVILLIDKLEFKPIDENYTNEMNLEKAKKAVNVLFINATNALKMDVTDYHIDQVANLVECISDDLYAKEKIKFTPCIKFAKQLSQARNLLSDPNFNNLNAENSWTANTGVTIIEGDPLYKGRAIQLSAARDENFPTYLYQKIDESLLKPYTRYQLRGFVEGSQDLELDLVRYGATDIVMNVPGDLEILSYSAPINPCEEIETRLDTTCGALDRCKQSNYVNSAADVRPDQVNGDPHAFSFHIDTGTTDNNRNLGIWIIFKIATPDGYATFGNLELIELGPLSGEALAQVQRKEQKWGKNTTQKREEAAKLYAAAKQTINQLFADSQGTKLRFDTEFSNILSADKLVYKIRDVYSEVLSVIPGLNYDLFMELENRIQNAIDLYDARNTVTNGEFRNGLANWMASSNTEVRQIQAHPCWYSLGWNAQVAQSLNVKPDHGYVLRVTAKKEGIGNGYVTILDCANHIDTLTFSSCDSGFTTSSNELAAYVTKTLEIFPDTDQIRIEIGETRSTFYVESVDLIRMED.

Belongs to the delta endotoxin family.

Functionally, promotes colloidosmotic lysis by binding to the midgut epithelial cells of insects. This chain is Pesticidal crystal protein Cry28Aa (cry28Aa), found in Bacillus thuringiensis subsp. finitimus.